A 450-amino-acid polypeptide reads, in one-letter code: MVLPVEPEYEQALSELQNSLKPFLAANPDYEKALEIVQIPERVLQFRVVWEDDQGKAQVNRGFRVQYNSALGPYKGGLRLHPSVNLSILKFLGFEQTFKNALTGLSMGGGKGGSDFDPKGKSDGEIRRFCTSFMSELFRHIGQDTDVPAGDIGTGAREIGYLFGAYKKLQNEFVGMLTGKGLAWGGSFIRPEATGYGLIYYVEHMIAKAAPEYSLSKPETLVAISGSGNVAQFTALKVIELGATVLSLSDSKGSLIAEKGYTKEFIKEIGQLKLKGGALESLAQREGYTYHAGKRPWSLLPVVHVALPGATQNEVSKTEAEDLIKAGVRIVAEGSNMGCTEDAIAVFEASRKAGAGGVWYAPGKASNCGGVAVSGLEMAQNSQRLAWTTDQVDQKLKKIMAECYEICLSAGTKWSGEEIKDGVLPSLLSGANVAGFIKVADAMREHGDWW.

The active site involves Lys-111.

It belongs to the Glu/Leu/Phe/Val dehydrogenases family. Homohexamer.

It carries out the reaction L-glutamate + NADP(+) + H2O = 2-oxoglutarate + NH4(+) + NADPH + H(+). In Laccaria bicolor (strain S238N-H82 / ATCC MYA-4686) (Bicoloured deceiver), this protein is NADP-specific glutamate dehydrogenase (GDHA).